Reading from the N-terminus, the 1276-residue chain is Component of gems protein 5 (1276 aa).

Residues 53 to 55 form an interaction with U4 snRNA region; it reads NWY. WD repeat units lie at residues 92 to 139, 183 to 223, 228 to 268, 271 to 336, 364 to 405, 438 to 481, 485 to 522, and 530 to 574; these read GHTD…DDHN, EHKA…VFPI, GNNI…TVCK, AHSA…IESG, NDKQ…SPPE, TTKN…IKIQ, GFVYSIDTCSYSPNTFAIGCGDNTIRLWSPTENSKDAY, and GIQS…SKIF. Residues 138-157 form a disordered region; the sequence is HNEDTEIGDDFKHGSGGGGS. The segment at 586–652 is disordered; it reads IWKPPPTPTP…NSNNEQQPNK (67 aa). Over residues 598-646 the composition is skewed to low complexity; it reads NINNNNNNNNNNNNNNNNNNNNNNNNNNNNNNNNNNNNINNNNNNNSNN. WD repeat units lie at residues 688-727 and 729-771; these read TFSKHKTDINFNLNGDMISIGYSDGTIDIFTSEFLFLTRI and EHKK…NQNE. The segment covering 772-793 has biased composition (basic and acidic residues); it reads NEKKIDNEKGKENENEKGKENE. A disordered region spans residues 772 to 809; the sequence is NEKKIDNEKGKENENEKGKENENENENENENENENENE. Residues 778 to 829 are a coiled coil; the sequence is NEKGKENENEKGKENENENENENENENENENENEIENIVNNNNENDTEIEIK. Over residues 794–809 the composition is skewed to acidic residues; that stretch reads NENENENENENENENE. 2 WD repeats span residues 863–903 and 906–946; these read GHKN…AISN and GHDG…FKTV. The interval 967–997 is disordered; it reads ITEQQQQQQQPQSPIKSNPDQSNNPSLVPPI. Residues 979–992 are compositionally biased toward polar residues; the sequence is SPIKSNPDQSNNPS.

Belongs to the WD repeat gemin-5 family. As to quaternary structure, part of the core SMN complex.

Its subcellular location is the nucleus. It localises to the nucleoplasm. It is found in the gem. The protein localises to the cytoplasm. Its function is as follows. The SMN complex catalyzes the assembly of small nuclear ribonucleoproteins (snRNPs), the building blocks of the spliceosome, and thereby plays an important role in the splicing of cellular pre-mRNAs. Most spliceosomal snRNPs contain a common set of Sm proteins SNRPB, SNRPD1, SNRPD2, SNRPD3, SNRPE, SNRPF and SNRPG that assemble in a heptameric protein ring on the Sm site of the small nuclear RNA to form the core snRNP (Sm core). In the cytosol, the Sm proteins SNRPD1, SNRPD2, SNRPE, SNRPF and SNRPG are trapped in an inactive 6S pICln-Sm complex by the chaperone CLNS1A that controls the assembly of the core snRNP. To assemble core snRNPs, the SMN complex accepts the trapped 5Sm proteins from CLNS1A forming an intermediate. Binding of snRNA inside 5Sm ultimately triggers eviction of the SMN complex, thereby allowing binding of SNRPD3 and SNRPB to complete assembly of the core snRNP. Within the SMN complex, GEMIN5 recognizes and delivers the small nuclear RNAs (snRNAs) to the SMN complex. Binds to the 7-methylguanosine cap of RNA molecules. In Dictyostelium discoideum (Social amoeba), this protein is Component of gems protein 5 (gemin5).